We begin with the raw amino-acid sequence, 119 residues long: MPSKQYRVDRLAQEIQKDVDEILLKRVRDPRVQNVTITGVDVTGDLQQATIYYSILSDLASDAEKAQAGLDKATGLIRSELGARLNIFKTPEIKFVRDPSVAYGSRIDQLINDLHKKEK.

Belongs to the RbfA family. Monomer. Binds 30S ribosomal subunits, but not 50S ribosomal subunits or 70S ribosomes.

It localises to the cytoplasm. In terms of biological role, one of several proteins that assist in the late maturation steps of the functional core of the 30S ribosomal subunit. Associates with free 30S ribosomal subunits (but not with 30S subunits that are part of 70S ribosomes or polysomes). Required for efficient processing of 16S rRNA. May interact with the 5'-terminal helix region of 16S rRNA. The chain is Ribosome-binding factor A from Limosilactobacillus reuteri (strain DSM 20016) (Lactobacillus reuteri).